The chain runs to 106 residues: Large ribosomal subunit protein bL21 (106 aa).

The protein belongs to the bacterial ribosomal protein bL21 family. In terms of assembly, part of the 50S ribosomal subunit. Contacts protein L20.

Its function is as follows. This protein binds to 23S rRNA in the presence of protein L20. This is Large ribosomal subunit protein bL21 from Thermosipho africanus (strain TCF52B).